The sequence spans 195 residues: Imidazoleglycerol-phosphate dehydratase (195 aa).

This sequence belongs to the imidazoleglycerol-phosphate dehydratase family.

It localises to the cytoplasm. It carries out the reaction D-erythro-1-(imidazol-4-yl)glycerol 3-phosphate = 3-(imidazol-4-yl)-2-oxopropyl phosphate + H2O. Its pathway is amino-acid biosynthesis; L-histidine biosynthesis; L-histidine from 5-phospho-alpha-D-ribose 1-diphosphate: step 6/9. The chain is Imidazoleglycerol-phosphate dehydratase from Shouchella clausii (strain KSM-K16) (Alkalihalobacillus clausii).